Reading from the N-terminus, the 83-residue chain is MAHKKGQGSTRNGRDSHSKRLGIKVGSGEVVRAGSILVRQRGTKWHPAKNVGRGTDDTLFALADGVVAFRKSNKTYISIETGA.

A disordered region spans residues 1 to 22; that stretch reads MAHKKGQGSTRNGRDSHSKRLG.

The protein belongs to the bacterial ribosomal protein bL27 family.

The protein is Large ribosomal subunit protein bL27 of Protochlamydia amoebophila (strain UWE25).